The following is a 482-amino-acid chain: Cobyric acid synthase (482 aa).

The 188-residue stretch at 243–430 (ACKVVVPQLE…LHGLFTSDAF (188 aa)) folds into the GATase cobBQ-type domain. The Nucleophile role is filled by cysteine 325. Residue histidine 422 is part of the active site.

It belongs to the CobB/CobQ family. CobQ subfamily.

It functions in the pathway cofactor biosynthesis; adenosylcobalamin biosynthesis. Catalyzes amidations at positions B, D, E, and G on adenosylcobyrinic A,C-diamide. NH(2) groups are provided by glutamine, and one molecule of ATP is hydrogenolyzed for each amidation. The protein is Cobyric acid synthase of Ruegeria sp. (strain TM1040) (Silicibacter sp.).